The primary structure comprises 181 residues: NAD(P)H-quinone oxidoreductase subunit I, chloroplastic (181 aa).

2 4Fe-4S ferredoxin-type domains span residues 55–84 (GRIHFEFDKCIACEVCVRVCPINLPVVDWE) and 95–124 (KNYSIDFAVCIFCGNCVEYCPTNCLSMTEE). 8 residues coordinate [4Fe-4S] cluster: Cys64, Cys67, Cys70, Cys74, Cys104, Cys107, Cys110, and Cys114.

Belongs to the complex I 23 kDa subunit family. As to quaternary structure, NDH is composed of at least 16 different subunits, 5 of which are encoded in the nucleus. The cofactor is [4Fe-4S] cluster.

The protein resides in the plastid. It localises to the chloroplast thylakoid membrane. The catalysed reaction is a plastoquinone + NADH + (n+1) H(+)(in) = a plastoquinol + NAD(+) + n H(+)(out). It carries out the reaction a plastoquinone + NADPH + (n+1) H(+)(in) = a plastoquinol + NADP(+) + n H(+)(out). Functionally, NDH shuttles electrons from NAD(P)H:plastoquinone, via FMN and iron-sulfur (Fe-S) centers, to quinones in the photosynthetic chain and possibly in a chloroplast respiratory chain. The immediate electron acceptor for the enzyme in this species is believed to be plastoquinone. Couples the redox reaction to proton translocation, and thus conserves the redox energy in a proton gradient. The polypeptide is NAD(P)H-quinone oxidoreductase subunit I, chloroplastic (Angiopteris evecta (Mule's foot fern)).